A 453-amino-acid chain; its full sequence is Macrophage scavenger receptor types I and II (453 aa).

At 1-50 (MAQWDDFPDQQEDTDSCTESVKFDARSVTALLPPHPKNGPTLQERMKSYK) the chain is on the cytoplasmic side. S27 carries the post-translational modification Phosphoserine. Residues 51-76 (TALITLYLIVFVVLVPIIGIVAAQLL) form a helical; Signal-anchor for type II membrane protein membrane-spanning segment. The spacer stretch occupies residues 77–108 (KWETKNCTVGSVNADISPSPEGKGNGSEDEMR). Topologically, residues 77–453 (KWETKNCTVG…DEDAGVTCTT (377 aa)) are extracellular. N-linked (GlcNAc...) asparagine glycosylation is found at N82, N101, N142, N183, N220, N248, and N266. Positions 194–255 (ETLNGRVQEN…LNNITNDLRL (62 aa)) form a coiled coil. Disordered stretches follow at residues 267 to 295 (ITLLQGPPGPPGEKGDRGPPGQNGIPGFP) and 313 to 349 (PGVRGFPGPMGKTGKPGLNGQKGQKGEKGSGSMQRQS). Positions 272-343 (GPPGPPGEKG…KGQKGEKGSG (72 aa)) constitute a Collagen-like domain. An SRCR domain is found at 352 to 452 (VRLVGGSGPH…HDEDAGVTCT (101 aa)). 3 disulfide bridges follow: C377-C441, C390-C451, and C421-C431.

As to quaternary structure, homotrimer. Interacts with MYO18A.

It localises to the membrane. In terms of biological role, membrane glycoproteins implicated in the pathologic deposition of cholesterol in arterial walls during atherogenesis. Two types of receptor subunits exist. These receptors mediate the endocytosis of a diverse group of macromolecules, including modified low density lipoproteins (LDL). This chain is Macrophage scavenger receptor types I and II (MSR1), found in Bos taurus (Bovine).